The following is a 206-amino-acid chain: Small ribosomal subunit protein uS4 (206 aa).

The segment covering 25–39 (DKLLDRKPNGPGKER) has biased composition (basic and acidic residues). The disordered stretch occupies residues 25 to 49 (DKLLDRKPNGPGKERGARKRGKTSV). Residues 95–157 (QRLDNTIYRM…KGIQNLIRHN (63 aa)) enclose the S4 RNA-binding domain.

This sequence belongs to the universal ribosomal protein uS4 family. In terms of assembly, part of the 30S ribosomal subunit. Contacts protein S5. The interaction surface between S4 and S5 is involved in control of translational fidelity.

Functionally, one of the primary rRNA binding proteins, it binds directly to 16S rRNA where it nucleates assembly of the body of the 30S subunit. In terms of biological role, with S5 and S12 plays an important role in translational accuracy. This Treponema denticola (strain ATCC 35405 / DSM 14222 / CIP 103919 / JCM 8153 / KCTC 15104) protein is Small ribosomal subunit protein uS4.